The following is a 217-amino-acid chain: ATP synthase subunit a (217 aa).

A run of 6 helical transmembrane segments spans residues 5-25 (EHVI…LAAG), 63-83 (LIAS…LPFV), 89-109 (NINT…FEGF), 120-140 (FMGP…MSHL), 157-177 (GAIL…TLAV), and 191-213 (LAIV…GAVV).

This sequence belongs to the ATPase A chain family. As to quaternary structure, F-type ATPases have 2 components, CF(1) - the catalytic core - and CF(0) - the membrane proton channel. CF(1) has five subunits: alpha(3), beta(3), gamma(1), delta(1), epsilon(1). CF(0) has three main subunits: a(1), b(2) and c(9-12). The alpha and beta chains form an alternating ring which encloses part of the gamma chain. CF(1) is attached to CF(0) by a central stalk formed by the gamma and epsilon chains, while a peripheral stalk is formed by the delta and b chains.

It localises to the cell inner membrane. Key component of the proton channel; it plays a direct role in the translocation of protons across the membrane. The protein is ATP synthase subunit a of Hydrogenobaculum sp. (strain Y04AAS1).